Here is a 404-residue protein sequence, read N- to C-terminus: Tryptophan synthase beta chain (404 aa).

Lysine 98 carries the post-translational modification N6-(pyridoxal phosphate)lysine.

The protein belongs to the TrpB family. Tetramer of two alpha and two beta chains. It depends on pyridoxal 5'-phosphate as a cofactor.

It catalyses the reaction (1S,2R)-1-C-(indol-3-yl)glycerol 3-phosphate + L-serine = D-glyceraldehyde 3-phosphate + L-tryptophan + H2O. Its pathway is amino-acid biosynthesis; L-tryptophan biosynthesis; L-tryptophan from chorismate: step 5/5. Its function is as follows. The beta subunit is responsible for the synthesis of L-tryptophan from indole and L-serine. This Rhodopseudomonas palustris (strain HaA2) protein is Tryptophan synthase beta chain.